The following is a 148-amino-acid chain: UPF0756 membrane protein ETA_17460 (148 aa).

The next 4 membrane-spanning stretches (helical) occupy residues 14–34 (ALSY…LIVI), 51–71 (MTVG…SGTI), 80–100 (FLHW…WLGG), and 112–132 (VVGG…GVPV).

Belongs to the UPF0756 family.

It localises to the cell membrane. This Erwinia tasmaniensis (strain DSM 17950 / CFBP 7177 / CIP 109463 / NCPPB 4357 / Et1/99) protein is UPF0756 membrane protein ETA_17460.